The chain runs to 658 residues: Methionine--tRNA ligase (658 aa).

The 'HIGH' region motif lies at 9 to 19; that stretch reads PYANGKAHVGH. Cys140, Cys143, Cys152, and Cys156 together coordinate Zn(2+). Positions 322 to 326 match the 'KMSKS' region motif; the sequence is TFSKS. Lys325 contributes to the ATP binding site. The tRNA-binding domain maps to 558–658; it reads DFQKLDIRIG…KEVEPGTRVC (101 aa).

The protein belongs to the class-I aminoacyl-tRNA synthetase family. MetG type 1 subfamily. Homodimer. It depends on Zn(2+) as a cofactor.

It localises to the cytoplasm. The catalysed reaction is tRNA(Met) + L-methionine + ATP = L-methionyl-tRNA(Met) + AMP + diphosphate. Functionally, is required not only for elongation of protein synthesis but also for the initiation of all mRNA translation through initiator tRNA(fMet) aminoacylation. The polypeptide is Methionine--tRNA ligase (Archaeoglobus fulgidus (strain ATCC 49558 / DSM 4304 / JCM 9628 / NBRC 100126 / VC-16)).